Here is a 245-residue protein sequence, read N- to C-terminus: MARRCQFENSNDIGVFCKLTSAYCLVSVGASENFYSVFESELVPHIPVIHTSIGGTRIVGRVTCGNKNGLLVPNTCNDNELRNIRNSLPDNVRVRRIEEKLSALGNCVVANDYVALIHPDLDRESEEIIADTLGVEVFRTTIANNVLVGTYCVINNRGGLVHPLASVEELDELANLLQIPLCAGTINRGSDVIGAGLVVNDWAAFCGLDTTSTEISVVENIFKLNEMKDENMDNEMRKDFVMNLE.

Belongs to the eIF-6 family. In terms of assembly, monomer. Associates with the 60S ribosomal subunit.

It is found in the cytoplasm. The protein localises to the nucleus. The protein resides in the nucleolus. Functionally, binds to the 60S ribosomal subunit and prevents its association with the 40S ribosomal subunit to form the 80S initiation complex in the cytoplasm. May also be involved in ribosome biogenesis. In Tetrahymena thermophila (strain SB210), this protein is Eukaryotic translation initiation factor 6.